Reading from the N-terminus, the 180-residue chain is Large ribosomal subunit protein uL5 (180 aa).

The protein belongs to the universal ribosomal protein uL5 family. Part of the 50S ribosomal subunit; part of the 5S rRNA/L5/L18/L25 subcomplex. Contacts the 5S rRNA and the P site tRNA. Forms a bridge to the 30S subunit in the 70S ribosome.

This is one of the proteins that bind and probably mediate the attachment of the 5S RNA into the large ribosomal subunit, where it forms part of the central protuberance. In the 70S ribosome it contacts protein S13 of the 30S subunit (bridge B1b), connecting the 2 subunits; this bridge is implicated in subunit movement. Contacts the P site tRNA; the 5S rRNA and some of its associated proteins might help stabilize positioning of ribosome-bound tRNAs. The chain is Large ribosomal subunit protein uL5 from Chloroflexus aggregans (strain MD-66 / DSM 9485).